The following is a 469-amino-acid chain: 6-phosphofructo-2-kinase/fructose-2,6-bisphosphatase 4 (469 aa).

The segment at 1–249 is 6-phosphofructo-2-kinase; sequence MASPRELTQN…YYLMNIHVTP (249 aa). At Ser-29 the chain carries Phosphoserine; by PKC. ATP is bound at residue 46 to 54; it reads GLPARGKTY. Beta-D-fructose 6-phosphate is bound by residues Arg-79 and Arg-103. The active site involves Asp-129. Beta-D-fructose 6-phosphate contacts are provided by Thr-131 and Arg-137. Cys-159 is an active-site residue. Residue 168-173 participates in ATP binding; the sequence is NIVQVK. Beta-D-fructose 6-phosphate contacts are provided by Lys-173, Arg-194, and Tyr-198. Residues 250–469 are fructose-2,6-bisphosphatase; sequence RSIYLCRHGE…EALVTVPAHQ (220 aa). Position 256 (Arg-256) interacts with beta-D-fructose 2,6-bisphosphate. Residue His-257 is the Tele-phosphohistidine intermediate of the active site. Positions 263, 269, and 306 each coordinate beta-D-fructose 2,6-bisphosphate. Catalysis depends on Glu-326, which acts as the Proton donor/acceptor. Beta-D-fructose 2,6-bisphosphate is bound by residues Tyr-337, Arg-351, Lys-355, Tyr-366, Gln-392, and Arg-396. Residue 348–351 participates in ATP binding; sequence FALR. ATP is bound by residues 392–396 and Tyr-428; that span reads QAVMR. Phosphothreonine; by PKC is present on Thr-444.

In the C-terminal section; belongs to the phosphoglycerate mutase family. As to quaternary structure, homodimer. Testis.

It catalyses the reaction beta-D-fructose 2,6-bisphosphate + H2O = beta-D-fructose 6-phosphate + phosphate. The enzyme catalyses beta-D-fructose 6-phosphate + ATP = beta-D-fructose 2,6-bisphosphate + ADP + H(+). With respect to regulation, the most important regulatory mechanism of these opposing activities is by phosphorylation and dephosphorylation of the enzyme. Functionally, synthesis and degradation of fructose 2,6-bisphosphate. This is 6-phosphofructo-2-kinase/fructose-2,6-bisphosphatase 4 (Pfkfb4) from Rattus norvegicus (Rat).